A 439-amino-acid chain; its full sequence is Serine hydroxymethyltransferase (439 aa).

Residues leucine 119 and 123–125 each bind (6S)-5,6,7,8-tetrahydrofolate; that span reads GHL. N6-(pyridoxal phosphate)lysine is present on lysine 228. 370–372 lines the (6S)-5,6,7,8-tetrahydrofolate pocket; that stretch reads SPF.

The protein belongs to the SHMT family. As to quaternary structure, homodimer. Pyridoxal 5'-phosphate is required as a cofactor.

Its subcellular location is the cytoplasm. It carries out the reaction (6R)-5,10-methylene-5,6,7,8-tetrahydrofolate + glycine + H2O = (6S)-5,6,7,8-tetrahydrofolate + L-serine. It functions in the pathway one-carbon metabolism; tetrahydrofolate interconversion. The protein operates within amino-acid biosynthesis; glycine biosynthesis; glycine from L-serine: step 1/1. In terms of biological role, catalyzes the reversible interconversion of serine and glycine with tetrahydrofolate (THF) serving as the one-carbon carrier. This reaction serves as the major source of one-carbon groups required for the biosynthesis of purines, thymidylate, methionine, and other important biomolecules. Also exhibits THF-independent aldolase activity toward beta-hydroxyamino acids, producing glycine and aldehydes, via a retro-aldol mechanism. The chain is Serine hydroxymethyltransferase from Chlorobium phaeobacteroides (strain BS1).